A 307-amino-acid chain; its full sequence is Olfactory receptor 5AC1 (307 aa).

At 1-28 (MAEENKILVTHFVLTGLTDHPGLQAPLF) the chain is on the extracellular side. Residues 29–49 (LVFLVIYLITLVGNLGLMALI) form a helical membrane-spanning segment. At 50-56 (WKDPHLH) the chain is on the cytoplasmic side. A helical transmembrane segment spans residues 57–77 (TPIYLFLGSLAFADACTSSSV). Topologically, residues 78–99 (TSKMLINFLSKNHMLSMAKCAT) are extracellular. Cysteines 97 and 179 form a disulfide. The helical transmembrane segment at 100-120 (QFYFFGSNATTECFLLVVMAY) threads the bilayer. The Cytoplasmic segment spans residues 121-143 (DRYVAICNPLLYPVVMSNSLCTQ). A helical transmembrane segment spans residues 144–164 (FIGISYFIGFLHSAIHVGLLF). Residues 165–195 (RLTFCRSNIIHYFYCEILQLFKISCTNPTVN) are Extracellular-facing. The chain crosses the membrane as a helical span at residues 196-216 (ILLIFIFSAFIQVFTFMTLIV). The Cytoplasmic segment spans residues 217 to 239 (SYSYILSAILKKKSEKGRSKAFS). Residues 240 to 260 (TCSAHLLSVSLFYGTLFFMYV) form a helical membrane-spanning segment. The Extracellular portion of the chain corresponds to 261–271 (SSRSGSAADQA). A helical transmembrane segment spans residues 272 to 292 (KMYSLFYTIIIPLLNPFIYSL). Residues 293–307 (RNKEVIDALRRIMKK) are Cytoplasmic-facing.

The protein belongs to the G-protein coupled receptor 1 family.

The protein resides in the cell membrane. Functionally, odorant receptor. The chain is Olfactory receptor 5AC1 (OR5AC1) from Homo sapiens (Human).